The chain runs to 75 residues: Toxin-like peptide AaF1CA7 (75 aa).

Positions 1–22 (MMKLMLFSIIVILFSLIGSIHG) are cleaved as a signal peptide. One can recognise an LCN-type CS-alpha/beta domain in the interval 25-75 (VPGNYPLDSSDDTYLCAPLGENPSCIQICRKHGVKYGYCYAFQCWCEYFGR). 3 disulfides stabilise this stretch: Cys-40-Cys-63, Cys-49-Cys-68, and Cys-53-Cys-70.

Belongs to the long (3 C-C) scorpion toxin superfamily. Expressed by the venom gland.

It localises to the secreted. Its function is as follows. Probable neurotoxin that inhibits ion channels. The chain is Toxin-like peptide AaF1CA7 from Androctonus australis (Sahara scorpion).